We begin with the raw amino-acid sequence, 237 residues long: Ribosomal RNA small subunit methyltransferase G (237 aa).

Residues Gly-78, Phe-83, 129 to 130 (AE), and Arg-148 each bind S-adenosyl-L-methionine.

It belongs to the methyltransferase superfamily. RNA methyltransferase RsmG family.

It localises to the cytoplasm. Specifically methylates the N7 position of a guanine in 16S rRNA. In Streptococcus pyogenes serotype M12 (strain MGAS2096), this protein is Ribosomal RNA small subunit methyltransferase G.